The following is a 239-amino-acid chain: Ribosomal RNA small subunit methyltransferase G (239 aa).

S-adenosyl-L-methionine contacts are provided by residues Gly78, Phe83, 129–130, and Arg148; that span reads AE.

It belongs to the methyltransferase superfamily. RNA methyltransferase RsmG family.

It localises to the cytoplasm. Functionally, specifically methylates the N7 position of a guanine in 16S rRNA. The polypeptide is Ribosomal RNA small subunit methyltransferase G (Clostridium botulinum (strain Okra / Type B1)).